Reading from the N-terminus, the 507-residue chain is Bifunctional purine biosynthesis protein PurH (507 aa).

One can recognise an MGS-like domain in the interval 1–149 (MSESKRIKTA…KNYNDVIIVA (149 aa)).

Belongs to the PurH family.

It catalyses the reaction (6R)-10-formyltetrahydrofolate + 5-amino-1-(5-phospho-beta-D-ribosyl)imidazole-4-carboxamide = 5-formamido-1-(5-phospho-D-ribosyl)imidazole-4-carboxamide + (6S)-5,6,7,8-tetrahydrofolate. It carries out the reaction IMP + H2O = 5-formamido-1-(5-phospho-D-ribosyl)imidazole-4-carboxamide. It participates in purine metabolism; IMP biosynthesis via de novo pathway; 5-formamido-1-(5-phospho-D-ribosyl)imidazole-4-carboxamide from 5-amino-1-(5-phospho-D-ribosyl)imidazole-4-carboxamide (10-formyl THF route): step 1/1. Its pathway is purine metabolism; IMP biosynthesis via de novo pathway; IMP from 5-formamido-1-(5-phospho-D-ribosyl)imidazole-4-carboxamide: step 1/1. In Bacteroides thetaiotaomicron (strain ATCC 29148 / DSM 2079 / JCM 5827 / CCUG 10774 / NCTC 10582 / VPI-5482 / E50), this protein is Bifunctional purine biosynthesis protein PurH.